The chain runs to 161 residues: Anther-specific protein LAT52 (161 aa).

Residues 1–17 form the signal peptide; sequence MAKAIVLLSALCILALA. 3 disulfides stabilise this stretch: Cys-35-Cys-106, Cys-38-Cys-147, and Cys-59-Cys-94. Asn-61 carries an N-linked (GlcNAc...) asparagine glycan.

Belongs to the Ole e I family. As to expression, expressed in anthers and pollen.

Functionally, may play a role during germination or early tube growth. The polypeptide is Anther-specific protein LAT52 (LAT52) (Solanum lycopersicum (Tomato)).